A 267-amino-acid polypeptide reads, in one-letter code: 4-hydroxy-tetrahydrodipicolinate reductase (267 aa).

10–15 (GCLGKQ) lines the NAD(+) pocket. Arginine 37 serves as a coordination point for NADP(+). Residues 99 to 101 (GTT) and 122 to 125 (TTNV) contribute to the NAD(+) site. The active-site Proton donor/acceptor is the histidine 154. Histidine 155 lines the (S)-2,3,4,5-tetrahydrodipicolinate pocket. Lysine 158 (proton donor) is an active-site residue. 164-165 (GT) provides a ligand contact to (S)-2,3,4,5-tetrahydrodipicolinate.

This sequence belongs to the DapB family.

It localises to the cytoplasm. It carries out the reaction (S)-2,3,4,5-tetrahydrodipicolinate + NAD(+) + H2O = (2S,4S)-4-hydroxy-2,3,4,5-tetrahydrodipicolinate + NADH + H(+). The enzyme catalyses (S)-2,3,4,5-tetrahydrodipicolinate + NADP(+) + H2O = (2S,4S)-4-hydroxy-2,3,4,5-tetrahydrodipicolinate + NADPH + H(+). Its pathway is amino-acid biosynthesis; L-lysine biosynthesis via DAP pathway; (S)-tetrahydrodipicolinate from L-aspartate: step 4/4. Catalyzes the conversion of 4-hydroxy-tetrahydrodipicolinate (HTPA) to tetrahydrodipicolinate. This chain is 4-hydroxy-tetrahydrodipicolinate reductase, found in Ehrlichia canis (strain Jake).